The chain runs to 251 residues: Imidazole glycerol phosphate synthase subunit HisF (251 aa).

Active-site residues include Asp-13 and Asp-132.

The protein belongs to the HisA/HisF family. Heterodimer of HisH and HisF.

It is found in the cytoplasm. It carries out the reaction 5-[(5-phospho-1-deoxy-D-ribulos-1-ylimino)methylamino]-1-(5-phospho-beta-D-ribosyl)imidazole-4-carboxamide + L-glutamine = D-erythro-1-(imidazol-4-yl)glycerol 3-phosphate + 5-amino-1-(5-phospho-beta-D-ribosyl)imidazole-4-carboxamide + L-glutamate + H(+). It participates in amino-acid biosynthesis; L-histidine biosynthesis; L-histidine from 5-phospho-alpha-D-ribose 1-diphosphate: step 5/9. Functionally, IGPS catalyzes the conversion of PRFAR and glutamine to IGP, AICAR and glutamate. The HisF subunit catalyzes the cyclization activity that produces IGP and AICAR from PRFAR using the ammonia provided by the HisH subunit. In Campylobacter concisus (strain 13826), this protein is Imidazole glycerol phosphate synthase subunit HisF.